The sequence spans 225 residues: Methylthioribulose-1-phosphate dehydratase (225 aa).

His106 and His108 together coordinate Zn(2+).

This sequence belongs to the aldolase class II family. MtnB subfamily. It depends on Zn(2+) as a cofactor.

It catalyses the reaction 5-(methylsulfanyl)-D-ribulose 1-phosphate = 5-methylsulfanyl-2,3-dioxopentyl phosphate + H2O. The protein operates within amino-acid biosynthesis; L-methionine biosynthesis via salvage pathway; L-methionine from S-methyl-5-thio-alpha-D-ribose 1-phosphate: step 2/6. Its function is as follows. Catalyzes the dehydration of methylthioribulose-1-phosphate (MTRu-1-P) into 2,3-diketo-5-methylthiopentyl-1-phosphate (DK-MTP-1-P). In Xanthomonas oryzae pv. oryzae (strain MAFF 311018), this protein is Methylthioribulose-1-phosphate dehydratase.